Reading from the N-terminus, the 634-residue chain is Kelch-like protein 22 (634 aa).

Alanine 2 is modified (N-acetylalanine). In terms of domain architecture, BTB spans 50–117 (FDVVLVVEGK…IYTSELELSL (68 aa)). 6 Kelch repeats span residues 299 to 349 (CVVG…VLNN), 350 to 399 (FVYL…VVGK), 400 to 446 (YIYA…TLQG), 448 to 493 (MYIT…ALLD), 495 to 544 (LFVI…VLDS), and 545 to 593 (RIYV…VLTL). Threonine 463 carries the phosphothreonine modification. Tyrosine 466 is modified (phosphotyrosine). Position 475 is a phosphothreonine (threonine 475). The tract at residues 600-634 (EQPRGTPNRSQADADFASEVMSVSDWEEFDNSSED) is disordered. Threonine 605 is subject to Phosphothreonine. Residues 624–634 (DWEEFDNSSED) show a composition bias toward acidic residues.

As to quaternary structure, component of the BCR(KLHL22) E3 ubiquitin ligase complex, at least composed of CUL3, KLHL22 and RBX1. Interacts with PLK1. Interacts with DEPDC5 (via DEP domain); the interaction depends on amino acid availability. Interacts with YWHAE; required for the nuclear localization of KLHL22 upon amino acid starvation.

Its subcellular location is the cytoplasm. The protein localises to the cytosol. The protein resides in the cytoskeleton. It localises to the microtubule organizing center. It is found in the centrosome. Its subcellular location is the spindle. The protein localises to the nucleus. The protein resides in the lysosome. The protein operates within protein modification; protein ubiquitination. Its function is as follows. Substrate-specific adapter of a BCR (BTB-CUL3-RBX1) E3 ubiquitin ligase complex required for chromosome alignment and localization of PLK1 at kinetochores. The BCR(KLHL22) ubiquitin ligase complex mediates monoubiquitination of PLK1, leading to PLK1 dissociation from phosphoreceptor proteins and subsequent removal from kinetochores, allowing silencing of the spindle assembly checkpoint (SAC) and chromosome segregation. Monoubiquitination of PLK1 does not lead to PLK1 degradation. The BCR(KLHL22) ubiquitin ligase complex is also responsible for the amino acid-stimulated 'Lys-48' polyubiquitination and proteasomal degradation of DEPDC5. Through the degradation of DEPDC5, releases the GATOR1 complex-mediated inhibition of the TORC1 pathway. It is therefore an amino acid-dependent activator within the amino acid-sensing branch of the TORC1 pathway, indirectly regulating different cellular processes including cell growth and autophagy. The protein is Kelch-like protein 22 of Mus musculus (Mouse).